The following is a 149-amino-acid chain: Cytochrome c-type biogenesis protein CcmE (149 aa).

Residues 1-7 (MTRKQKR) are Cytoplasmic-facing. Residues 8–28 (LAVIAGGMGFIATAVLLVLFA) traverse the membrane as a helical; Signal-anchor for type II membrane protein segment. At 29-149 (FSQSVAYFYM…GVWKGEEASQ (121 aa)) the chain is on the periplasmic side. The heme site is built by His-123 and Tyr-127.

The protein belongs to the CcmE/CycJ family.

It is found in the cell inner membrane. Its function is as follows. Heme chaperone required for the biogenesis of c-type cytochromes. Transiently binds heme delivered by CcmC and transfers the heme to apo-cytochromes in a process facilitated by CcmF and CcmH. The sequence is that of Cytochrome c-type biogenesis protein CcmE from Rhizobium rhizogenes (strain K84 / ATCC BAA-868) (Agrobacterium radiobacter).